Consider the following 314-residue polypeptide: DNA-directed RNA polymerase subunit alpha (314 aa).

Residues 1–228 (MAQYTIECVE…DQLRPLQEIT (228 aa)) form an alpha N-terminal domain (alpha-NTD) region. The tract at residues 241–314 (NTVGQVPIEE…SLPKDKPARS (74 aa)) is alpha C-terminal domain (alpha-CTD).

The protein belongs to the RNA polymerase alpha chain family. In cyanobacteria the RNAP catalytic core is composed of 2 alpha, 1 beta, 1 beta', 1 gamma and 1 omega subunit. When a sigma factor is associated with the core the holoenzyme is formed, which can initiate transcription.

It catalyses the reaction RNA(n) + a ribonucleoside 5'-triphosphate = RNA(n+1) + diphosphate. DNA-dependent RNA polymerase catalyzes the transcription of DNA into RNA using the four ribonucleoside triphosphates as substrates. The polypeptide is DNA-directed RNA polymerase subunit alpha (Gloeobacter violaceus (strain ATCC 29082 / PCC 7421)).